The following is an 82-amino-acid chain: Probable tautomerase XF_1725 (82 aa).

Pro-2 acts as the Proton acceptor; via imino nitrogen in catalysis.

The protein belongs to the 4-oxalocrotonate tautomerase family.

This is Probable tautomerase XF_1725 from Xylella fastidiosa (strain 9a5c).